Consider the following 429-residue polypeptide: Argininosuccinate lyase (429 aa).

The protein belongs to the lyase 1 family. Argininosuccinate lyase subfamily.

It localises to the cytoplasm. It catalyses the reaction 2-(N(omega)-L-arginino)succinate = fumarate + L-arginine. Its pathway is amino-acid biosynthesis; L-arginine biosynthesis; L-arginine from L-ornithine and carbamoyl phosphate: step 3/3. This is Argininosuccinate lyase from Pyrobaculum aerophilum (strain ATCC 51768 / DSM 7523 / JCM 9630 / CIP 104966 / NBRC 100827 / IM2).